A 288-amino-acid polypeptide reads, in one-letter code: ATP synthase gamma chain (288 aa).

The protein belongs to the ATPase gamma chain family. As to quaternary structure, F-type ATPases have 2 components, CF(1) - the catalytic core - and CF(0) - the membrane proton channel. CF(1) has five subunits: alpha(3), beta(3), gamma(1), delta(1), epsilon(1). CF(0) has three main subunits: a, b and c.

It localises to the cell membrane. Its function is as follows. Produces ATP from ADP in the presence of a proton gradient across the membrane. The gamma chain is believed to be important in regulating ATPase activity and the flow of protons through the CF(0) complex. This chain is ATP synthase gamma chain, found in Staphylococcus saprophyticus subsp. saprophyticus (strain ATCC 15305 / DSM 20229 / NCIMB 8711 / NCTC 7292 / S-41).